The following is an 84-amino-acid chain: Large ribosomal subunit protein bL27 (84 aa).

Residues 1–25 (MAHKKGQGSTQNNRDSAGRRLGVKK) are disordered.

The protein belongs to the bacterial ribosomal protein bL27 family.

This chain is Large ribosomal subunit protein bL27, found in Sulfurovum sp. (strain NBC37-1).